A 155-amino-acid chain; its full sequence is 6,7-dimethyl-8-ribityllumazine synthase (155 aa).

5-amino-6-(D-ribitylamino)uracil is bound by residues F24, A58–E60, and V82–I84. A87–T88 is a binding site for (2S)-2-hydroxy-3-oxobutyl phosphate. Residue H90 is the Proton donor of the active site. F115 is a 5-amino-6-(D-ribitylamino)uracil binding site. R129 contacts (2S)-2-hydroxy-3-oxobutyl phosphate.

Belongs to the DMRL synthase family.

It catalyses the reaction (2S)-2-hydroxy-3-oxobutyl phosphate + 5-amino-6-(D-ribitylamino)uracil = 6,7-dimethyl-8-(1-D-ribityl)lumazine + phosphate + 2 H2O + H(+). The protein operates within cofactor biosynthesis; riboflavin biosynthesis; riboflavin from 2-hydroxy-3-oxobutyl phosphate and 5-amino-6-(D-ribitylamino)uracil: step 1/2. In terms of biological role, catalyzes the formation of 6,7-dimethyl-8-ribityllumazine by condensation of 5-amino-6-(D-ribitylamino)uracil with 3,4-dihydroxy-2-butanone 4-phosphate. This is the penultimate step in the biosynthesis of riboflavin. The sequence is that of 6,7-dimethyl-8-ribityllumazine synthase from Chloroherpeton thalassium (strain ATCC 35110 / GB-78).